Reading from the N-terminus, the 503-residue chain is GMP synthase [glutamine-hydrolyzing] (503 aa).

Residues 1–189 (MVLVLDFGSQ…FLELAGVKRD (189 aa)) enclose the Glutamine amidotransferase type-1 domain. Cysteine 78 (nucleophile) is an active-site residue. Catalysis depends on residues histidine 164 and glutamate 166. In terms of domain architecture, GMPS ATP-PPase spans 190 to 378 (WTPEHVLEEL…LGLPDTLRLR (189 aa)). An ATP-binding site is contributed by 217-223 (SGGVDSS).

In terms of assembly, homodimer.

It catalyses the reaction XMP + L-glutamine + ATP + H2O = GMP + L-glutamate + AMP + diphosphate + 2 H(+). It participates in purine metabolism; GMP biosynthesis; GMP from XMP (L-Gln route): step 1/1. Its function is as follows. Catalyzes the synthesis of GMP from XMP. In Thermus thermophilus (strain ATCC 27634 / DSM 579 / HB8), this protein is GMP synthase [glutamine-hydrolyzing].